The chain runs to 178 residues: Caveolin-1 (178 aa).

N-acetylserine is present on S2. Phosphoserine is present on S2. The required for homooligomerization stretch occupies residues 2–94 (SGGKYVDSEG…WKASFTTFTV (93 aa)). Over 2-104 (SGGKYVDSEG…TKYWFYRLLS (103 aa)) the chain is Cytoplasmic. Residue K5 is modified to N6-acetyllysine; alternate. K5 participates in a covalent cross-link: Glycyl lysine isopeptide (Lys-Gly) (interchain with G-Cter in ubiquitin); alternate. The residue at position 6 (Y6) is a Phosphotyrosine. Position 9 is a phosphoserine (S9). Residue Y14 is modified to Phosphotyrosine; by ABL1. Y25 is modified (phosphotyrosine). Glycyl lysine isopeptide (Lys-Gly) (interchain with G-Cter in ubiquitin) cross-links involve residues K26, K39, K47, and K57. An interaction with CAVIN3 region spans residues 82–94 (DGIWKASFTTFTV). The segment at residues 105-125 (ALFGIPMALIWGIYFAILSFL) is an intramembrane region (helical). At 126–178 (HIWAVVPCIKSFLIEIQCISRVYSIYVHTFCDPLFEAIGKIFSSIRINMQKEI) the chain is on the cytoplasmic side. An interacts with SPRY1, SPRY2, SPRY3 and SPRY4 region spans residues 131-142 (VPCIKSFLIEIQ). 3 S-palmitoyl cysteine lipidation sites follow: C133, C143, and C156. The interacts with SPRY1, SPRY2, and SPRY4 stretch occupies residues 149–160 (SIYVHTFCDPLF). The segment at 167-178 (FSSIRINMQKEI) is interacts with SPRY1, SPRY2, SPRY3 and SPRY4.

It belongs to the caveolin family. As to quaternary structure, homooligomer. Interacts with GLIPR2. Interacts with NOSTRIN. Interacts with SNAP25 and STX1A. Interacts (via the N-terminus) with DPP4; the interaction is direct. Interacts with CTNNB1, CDH1 and JUP. Interacts with PACSIN2; this interaction induces membrane tubulation. Interacts with SLC7A9. Interacts with BMX and BTK. Interacts with TGFBR1. Interacts with CAVIN3 (via leucine-zipper domain) in a cholesterol-sensitive manner. Interacts with CAVIN1. Interacts with EHD2 in a cholesterol-dependent manner. Forms a ternary complex with UBXN6 and VCP; mediates CAV1 targeting to lysosomes for degradation. Interacts with ABCG1; this interaction regulates ABCG1-mediated cholesterol efflux. Interacts with NEU3; this interaction enhances NEU3 sialidase activity within caveola. Interacts (via C-terminus) with SPRY1, SPRY2 (via C-terminus), SPRY3, and SPRY4. Interacts with IGFBP5; this interaction allows trafficking of IGFBP5 from the plasma membrane to the nucleus. Phosphorylated at Tyr-14 by ABL1 in response to oxidative stress. In terms of processing, ubiquitinated. Undergo monoubiquitination and multi- and/or polyubiquitination. Monoubiquitination of N-terminal lysines promotes integration in a ternary complex with UBXN6 and VCP which promotes oligomeric CAV1 targeting to lysosomes for degradation. Ubiquitinated by ZNRF1; leading to degradation and modulation of the TLR4-mediated immune response.

Its subcellular location is the golgi apparatus membrane. It is found in the cell membrane. The protein localises to the membrane. The protein resides in the caveola. It localises to the membrane raft. Its function is as follows. May act as a scaffolding protein within caveolar membranes. Forms a stable heterooligomeric complex with CAV2 that targets to lipid rafts and drives caveolae formation. Mediates the recruitment of CAVIN proteins (CAVIN1/2/3/4) to the caveolae. Interacts directly with G-protein alpha subunits and can functionally regulate their activity. Involved in the costimulatory signal essential for T-cell receptor (TCR)-mediated T-cell activation. Its binding to DPP4 induces T-cell proliferation and NF-kappa-B activation in a T-cell receptor/CD3-dependent manner. Recruits CTNNB1 to caveolar membranes and may regulate CTNNB1-mediated signaling through the Wnt pathway. Negatively regulates TGFB1-mediated activation of SMAD2/3 by mediating the internalization of TGFBR1 from membrane rafts leading to its subsequent degradation. Binds 20(S)-hydroxycholesterol (20(S)-OHC). In Loxodonta africana (African elephant), this protein is Caveolin-1 (CAV1).